The sequence spans 470 residues: Growth/differentiation factor 6 (470 aa).

A signal peptide spans 1-22 (MDTSRVLLSAVFLISFLWDLPG). A propeptide spanning residues 23–350 (FQQASISSSS…SPSPGRRRRR (328 aa)) is cleaved from the precursor. The tract at residues 28 to 98 (ISSSSSSAEL…REPPGRGPRV (71 aa)) is disordered. Basic and acidic residues predominate over residues 45–80 (SRKEGRMPRAPRENATAREPLDRQEPPPRPQEEPQR). Asparagine 120 is a glycosylation site (N-linked (GlcNAc...) asparagine). Disordered regions lie at residues 247–272 (PGAAEDEARAPGPQQPPPPDLRSLGF) and 308–366 (TEVV…KKSR). A compositionally biased stretch (pro residues) spans 321 to 333 (GPPPPPPPPPPSG). The span at 345-366 (GRRRRRTAFASRHGKRHGKKSR) shows a compositional bias: basic residues. Cystine bridges form between cysteine 369–cysteine 435, cysteine 398–cysteine 467, and cysteine 402–cysteine 469.

It belongs to the TGF-beta family. Homodimer; disulfide-linked.

Its subcellular location is the secreted. Functionally, growth factor that controls proliferation and cellular differentiation in the retina and bone formation. Plays a key role in regulating apoptosis during retinal development. Establishes dorsal-ventral positional information in the retina and controls the formation of the retinotectal map. Required for normal formation of bones and joints in the limbs, skull, digits and axial skeleton. Plays a key role in establishing boundaries between skeletal elements during development. Regulation of GDF6 expression seems to be a mechanism for evolving species-specific changes in skeletal structures. Seems to positively regulate differentiation of chondrogenic tissue through the growth factor receptors subunits BMPR1A, BMPR1B, BMPR2 and ACVR2A, leading to the activation of SMAD1-SMAD5-SMAD8 complex. The regulation of chondrogenic differentiation is inhibited by NOG. Also involved in the induction of adipogenesis from mesenchymal stem cells. This mechanism acts through the growth factor receptors subunits BMPR1A, BMPR2 and ACVR2A and the activation of SMAD1-SMAD5-SMAD8 complex and MAPK14/p38. This chain is Growth/differentiation factor 6 (GDF6), found in Bos taurus (Bovine).